The chain runs to 341 residues: UPF0283 membrane protein HD_1769 (341 aa).

3 helical membrane passes run 57–77 (LLAV…QCLI), 86–106 (IDLA…GAII), and 204–224 (ENAI…MIAW).

It belongs to the UPF0283 family.

The protein resides in the cell inner membrane. This Haemophilus ducreyi (strain 35000HP / ATCC 700724) protein is UPF0283 membrane protein HD_1769.